Here is a 693-residue protein sequence, read N- to C-terminus: Homoaconitase, mitochondrial (693 aa).

The N-terminal 17 residues, 1–17, are a transit peptide targeting the mitochondrion; the sequence is MFRVQRLRMFSTSRALY. The [4Fe-4S] cluster site is built by Cys-338, Cys-405, and Cys-408.

The protein belongs to the aconitase/IPM isomerase family. Requires [4Fe-4S] cluster as cofactor.

Its subcellular location is the mitochondrion. The enzyme catalyses (2R,3S)-homoisocitrate = cis-homoaconitate + H2O. It participates in amino-acid biosynthesis; L-lysine biosynthesis via AAA pathway; L-alpha-aminoadipate from 2-oxoglutarate: step 3/5. In terms of biological role, catalyzes the reversible hydration of cis-homoaconitate to (2R,3S)-homoisocitrate, a step in the alpha-aminoadipate pathway for lysine biosynthesis. The polypeptide is Homoaconitase, mitochondrial (LYS4) (Kluyveromyces lactis (strain ATCC 8585 / CBS 2359 / DSM 70799 / NBRC 1267 / NRRL Y-1140 / WM37) (Yeast)).